A 1689-amino-acid polypeptide reads, in one-letter code: DNA-directed RNA polymerase I subunit rpa1 (1689 aa).

Residues Cys63, Cys66, Cys73, and His76 each coordinate Zn(2+). Residues Ser159 and Ser161 each carry the phosphoserine modification. A compositionally biased stretch (basic and acidic residues) spans 269–280 (VLRDTSKKHHED). The tract at residues 269–295 (VLRDTSKKHHEDEGYDGDSDSSNESEV) is disordered. A compositionally biased stretch (acidic residues) spans 281-295 (EGYDGDSDSSNESEV). Residues Asp643, Asp645, and Asp647 each contribute to the Mg(2+) site. The tract at residues 1005–1017 (PQEYYFHCMAGRE) is bridging helix. The disordered stretch occupies residues 1346-1440 (RKSGGKDDTV…EEDEGFKSDE (95 aa)). Ser1438 and Ser1441 each carry phosphoserine.

Belongs to the RNA polymerase beta' chain family. As to quaternary structure, component of the RNA polymerase I (Pol I) complex consisting of at least 13 subunits.

It is found in the nucleus. Its subcellular location is the nucleolus. The enzyme catalyses RNA(n) + a ribonucleoside 5'-triphosphate = RNA(n+1) + diphosphate. Its function is as follows. DNA-dependent RNA polymerase catalyzes the transcription of DNA into RNA using the four ribonucleoside triphosphates as substrates. Largest and catalytic core component of RNA polymerase I which synthesizes ribosomal RNA precursors. Forms the polymerase active center together with the second largest subunit. A single stranded DNA template strand of the promoter is positioned within the central active site cleft of Pol I. A bridging helix emanates from RPA1 and crosses the cleft near the catalytic site and is thought to promote translocation of Pol I by acting as a ratchet that moves the RNA-DNA hybrid through the active site by switching from straight to bent conformations at each step of nucleotide addition. The sequence is that of DNA-directed RNA polymerase I subunit rpa1 (rpa1) from Schizosaccharomyces pombe (strain 972 / ATCC 24843) (Fission yeast).